The sequence spans 426 residues: Selenocysteine lyase (426 aa).

Position 239 is an N6-(pyridoxal phosphate)lysine (lysine 239). Cysteine 367 serves as the catalytic S-selanylcysteine intermediate.

Belongs to the class-V pyridoxal-phosphate-dependent aminotransferase family. As to quaternary structure, homodimer. It depends on pyridoxal 5'-phosphate as a cofactor.

The protein localises to the cytoplasm. Its subcellular location is the cytosol. It catalyses the reaction L-selenocysteine + AH2 = hydrogenselenide + L-alanine + A + H(+). In terms of biological role, catalyzes the decomposition of L-selenocysteine to L-alanine and elemental selenium. The sequence is that of Selenocysteine lyase (scly) from Xenopus laevis (African clawed frog).